The chain runs to 90 residues: YcgL domain-containing protein YpsIP31758_2009 (90 aa).

One can recognise a YcgL domain in the interval 1-85; it reads MLCAIYRSPK…PPESLLKMHL (85 aa).

The protein is YcgL domain-containing protein YpsIP31758_2009 of Yersinia pseudotuberculosis serotype O:1b (strain IP 31758).